We begin with the raw amino-acid sequence, 213 residues long: V-type proton ATPase subunit c'' (213 aa).

At 1-14 (MNKESKDDDMSLGK) the chain is on the vacuolar side. A helical membrane pass occupies residues 15–35 (FSFSHFLYYLVLIVVIVYGLY). Topologically, residues 36–61 (KLFTGHGSDINFGKFLLRTSPYMWAN) are cytoplasmic. A helical membrane pass occupies residues 62–82 (LGIALCVGLSVVGAAWGIFIT). At 83-100 (GSSMIGAGVRAPRITTKN) the chain is on the vacuolar side. Residues 101 to 121 (LISIIFCEVVAIYGLIIAIVF) traverse the membrane as a helical segment. The Cytoplasmic segment spans residues 122–144 (SSKLTVATAENMYSKSNLYTGYS). The helical transmembrane segment at 145 to 165 (LFWAGITVGASNLICGIAVGI) threads the bilayer. The Vacuolar segment spans residues 166–183 (TGATAAISDAADSALFVK). Residues 184–204 (ILVIEIFGSILGLLGLIVGLL) traverse the membrane as a helical segment. At 205-213 (MAGKASEFQ) the chain is on the cytoplasmic side.

This sequence belongs to the V-ATPase proteolipid subunit family. In terms of assembly, V-ATPase is a heteromultimeric enzyme composed of a peripheral catalytic V1 complex (components A to H) attached to an integral membrane V0 proton pore complex (components: a, c, c', c'', d, e, f and VOA1). The decameric c-ring forms the proton-conducting pore, and is composed of eight proteolipid subunits c, one subunit c' and one subunit c''.

It localises to the vacuole membrane. Proton-conducting pore forming subunit of the V0 complex of vacuolar(H+)-ATPase (V-ATPase), a multisubunit enzyme composed of a peripheral complex (V1) that hydrolyzes ATP and a membrane integral complex (V0) that translocates protons. V-ATPase is responsible for acidifying and maintaining the pH of intracellular compartments. The protein is V-type proton ATPase subunit c'' (VMA16) of Saccharomyces cerevisiae (strain ATCC 204508 / S288c) (Baker's yeast).